A 118-amino-acid polypeptide reads, in one-letter code: Large ribosomal subunit protein uL18 (118 aa).

The protein belongs to the universal ribosomal protein uL18 family. As to quaternary structure, part of the 50S ribosomal subunit; part of the 5S rRNA/L5/L18/L25 subcomplex. Contacts the 5S and 23S rRNAs.

This is one of the proteins that bind and probably mediate the attachment of the 5S RNA into the large ribosomal subunit, where it forms part of the central protuberance. In Zymomonas mobilis subsp. mobilis (strain ATCC 31821 / ZM4 / CP4), this protein is Large ribosomal subunit protein uL18.